The following is a 516-amino-acid chain: L-amino acid oxidase Lm29 (516 aa).

The signal sequence occupies residues 1–18; it reads MNVFFMFSLLFLAALGSC. Cysteine 28 and cysteine 191 are joined by a disulfide. Residues 61-62, 81-82, arginine 89, and 105-108 each bind FAD; these read MS, EA, and GPMR. Arginine 108 provides a ligand contact to substrate. The N-linked (GlcNAc...) asparagine glycan is linked to asparagine 190. Histidine 241 provides a ligand contact to substrate. Valine 279 provides a ligand contact to FAD. Cysteine 349 and cysteine 430 are joined by a disulfide. N-linked (GlcNAc...) asparagine glycosylation is present at asparagine 379. Substrate is bound at residue tyrosine 390. FAD is bound by residues glutamate 475 and 482–487; that span reads GWIDST. Substrate is bound at residue 482-483; sequence GW.

This sequence belongs to the flavin monoamine oxidase family. FIG1 subfamily. Homodimer; non-covalently linked. It depends on FAD as a cofactor. Expressed by the venom gland.

It localises to the secreted. The enzyme catalyses an L-alpha-amino acid + O2 + H2O = a 2-oxocarboxylate + H2O2 + NH4(+). The catalysed reaction is L-leucine + O2 + H2O = 4-methyl-2-oxopentanoate + H2O2 + NH4(+). It catalyses the reaction L-phenylalanine + O2 + H2O = 3-phenylpyruvate + H2O2 + NH4(+). It carries out the reaction L-tryptophan + O2 + H2O = indole-3-pyruvate + H2O2 + NH4(+). The enzyme catalyses L-methionine + O2 + H2O = 4-methylsulfanyl-2-oxobutanoate + H2O2 + NH4(+). The catalysed reaction is L-isoleucine + O2 + H2O = (S)-3-methyl-2-oxopentanoate + H2O2 + NH4(+). It catalyses the reaction L-tyrosine + O2 + H2O = 3-(4-hydroxyphenyl)pyruvate + H2O2 + NH4(+). Its function is as follows. Catalyzes an oxidative deamination of predominantly hydrophobic and aromatic L-amino acids, thus producing hydrogen peroxide that may contribute to the diverse toxic effects of this enzyme. Is highly active on L-Met=L-Leu&gt;&gt;L-Phe&gt;L-Trp&gt;L-Tyr&gt;L-Ile, and weakly or not active on L-His, L-Arg, L-Val, L-Gln, L-Thr, L-Lys, and L-Ser. Exhibits a low myotoxicity (a mild myonecrosis is observed after injection in mice quadriceps muscle). In vitro, is cytotoxic to a lot of human cell lines, including AGS (IC(50)=22.7 ug/ml), MCF-7 (IC(50)=1.4 ug/ml), HL-60, HeLa and Jurkat cells, as well as to the parasite Leishmania brasiliensis (IC(50)=2.22 ug/ml). This cytotoxicity is dependent on the production of hydrogen peroxyde, since it is inhibited by catalase, a hydrogen peroxyde scavenger. The polypeptide is L-amino acid oxidase Lm29 (Lachesis muta (South American bushmaster)).